We begin with the raw amino-acid sequence, 335 residues long: Probable deoxyhypusine synthase (335 aa).

K307 serves as the catalytic Nucleophile.

This sequence belongs to the deoxyhypusine synthase family. NAD(+) is required as a cofactor.

It carries out the reaction [eIF5A protein]-L-lysine + spermidine = [eIF5A protein]-deoxyhypusine + propane-1,3-diamine. It participates in protein modification; eIF5A hypusination. In terms of biological role, catalyzes the NAD-dependent oxidative cleavage of spermidine and the subsequent transfer of the butylamine moiety of spermidine to the epsilon-amino group of a specific lysine residue of the eIF-5A precursor protein to form the intermediate deoxyhypusine residue. The sequence is that of Probable deoxyhypusine synthase (dys) from Pyrococcus abyssi (strain GE5 / Orsay).